A 144-amino-acid polypeptide reads, in one-letter code: Large ribosomal subunit protein uL13 (144 aa).

It belongs to the universal ribosomal protein uL13 family. Part of the 50S ribosomal subunit.

Functionally, this protein is one of the early assembly proteins of the 50S ribosomal subunit, although it is not seen to bind rRNA by itself. It is important during the early stages of 50S assembly. The chain is Large ribosomal subunit protein uL13 from Clostridium perfringens (strain ATCC 13124 / DSM 756 / JCM 1290 / NCIMB 6125 / NCTC 8237 / Type A).